Consider the following 128-residue polypeptide: Fluoride-specific ion channel FluC (128 aa).

Helical transmembrane passes span 7 to 27 (AVLLVGAGGFAGASARYLIAV), 34 to 54 (TGFPMATMLVNVLGCFLIGMI), 70 to 90 (LLLATGFCGGFTTFSSYMYEI), and 104 to 124 (LYLIGSLVGGMVFLYLGMALA). 2 residues coordinate Na(+): Gly78 and Thr81.

Belongs to the fluoride channel Fluc/FEX (TC 1.A.43) family.

Its subcellular location is the cell inner membrane. It carries out the reaction fluoride(in) = fluoride(out). Na(+) is not transported, but it plays an essential structural role and its presence is essential for fluoride channel function. Functionally, fluoride-specific ion channel. Important for reducing fluoride concentration in the cell, thus reducing its toxicity. This Prosthecochloris aestuarii (strain DSM 271 / SK 413) protein is Fluoride-specific ion channel FluC.